Consider the following 1172-residue polypeptide: Lysylphosphatidylglycerol biosynthesis bifunctional protein LysX (1172 aa).

Residues methionine 1–arginine 34 form a disordered region. The segment at methionine 1 to aspartate 663 is phosphatidylglycerol lysyltransferase. Over residues valine 17 to aspartate 31 the composition is skewed to polar residues. The next 7 membrane-spanning stretches (helical) occupy residues valine 80–valine 100, phenylalanine 122–alanine 142, isoleucine 146–isoleucine 166, phenylalanine 177–tyrosine 197, alanine 214–phenylalanine 234, alanine 272–serine 292, and valine 612–serine 632. The tract at residues valine 664–histidine 1172 is lysine--tRNA ligase. Residues valine 726–isoleucine 804 constitute a DNA-binding region (OB). The Mg(2+) site is built by aspartate 1084 and glutamate 1091.

It in the N-terminal section; belongs to the LPG synthetase family. This sequence in the C-terminal section; belongs to the class-II aminoacyl-tRNA synthetase family. It depends on Mg(2+) as a cofactor.

It localises to the cell membrane. It carries out the reaction tRNA(Lys) + L-lysine + ATP = L-lysyl-tRNA(Lys) + AMP + diphosphate. It catalyses the reaction L-lysyl-tRNA(Lys) + a 1,2-diacyl-sn-glycero-3-phospho-(1'-sn-glycerol) = a 1,2-diacyl-sn-glycero-3-phospho-1'-(3'-O-L-lysyl)-sn-glycerol + tRNA(Lys). In terms of biological role, catalyzes the production of L-lysyl-tRNA(Lys)transfer and the transfer of a lysyl group from L-lysyl-tRNA(Lys) to membrane-bound phosphatidylglycerol (PG), which produces lysylphosphatidylglycerol (LPG), one of the components of the bacterial membrane with a positive net charge. LPG synthesis contributes to the resistance to cationic antimicrobial peptides (CAMPs) and likely protects M.tuberculosis against the CAMPs produced by competiting microorganisms (bacteriocins). In fact, the modification of anionic phosphatidylglycerol with positively charged L-lysine results in repulsion of the peptides. This Mycobacterium bovis (strain ATCC BAA-935 / AF2122/97) protein is Lysylphosphatidylglycerol biosynthesis bifunctional protein LysX (lysX).